The following is a 159-amino-acid chain: Cyclic pyranopterin monophosphate synthase (159 aa).

Residues 75–77 (LCH) and 113–114 (ME) contribute to the substrate site. The active site involves D128.

Belongs to the MoaC family. As to quaternary structure, homohexamer; trimer of dimers.

The enzyme catalyses (8S)-3',8-cyclo-7,8-dihydroguanosine 5'-triphosphate = cyclic pyranopterin phosphate + diphosphate. It participates in cofactor biosynthesis; molybdopterin biosynthesis. Functionally, catalyzes the conversion of (8S)-3',8-cyclo-7,8-dihydroguanosine 5'-triphosphate to cyclic pyranopterin monophosphate (cPMP). In Yersinia pseudotuberculosis serotype O:3 (strain YPIII), this protein is Cyclic pyranopterin monophosphate synthase.